A 467-amino-acid polypeptide reads, in one-letter code: UDP-N-acetylmuramate--L-alanine ligase (467 aa).

112–118 (GTHGKTT) is an ATP binding site.

The protein belongs to the MurCDEF family.

The protein resides in the cytoplasm. The enzyme catalyses UDP-N-acetyl-alpha-D-muramate + L-alanine + ATP = UDP-N-acetyl-alpha-D-muramoyl-L-alanine + ADP + phosphate + H(+). It participates in cell wall biogenesis; peptidoglycan biosynthesis. Functionally, cell wall formation. The polypeptide is UDP-N-acetylmuramate--L-alanine ligase (Paraburkholderia xenovorans (strain LB400)).